Reading from the N-terminus, the 200-residue chain is Molybdenum cofactor guanylyltransferase (200 aa).

GTP contacts are provided by residues 15 to 17, Lys-28, Asp-74, and Asp-104; that span reads LSG. Asp-104 is a binding site for Mg(2+).

Belongs to the MobA family. In terms of assembly, monomer. Requires Mg(2+) as cofactor.

It localises to the cytoplasm. It carries out the reaction Mo-molybdopterin + GTP + H(+) = Mo-molybdopterin guanine dinucleotide + diphosphate. Transfers a GMP moiety from GTP to Mo-molybdopterin (Mo-MPT) cofactor (Moco or molybdenum cofactor) to form Mo-molybdopterin guanine dinucleotide (Mo-MGD) cofactor. This Pseudomonas fluorescens (strain SBW25) protein is Molybdenum cofactor guanylyltransferase.